The sequence spans 89 residues: Small ribosomal subunit protein uS15 (89 aa).

It belongs to the universal ribosomal protein uS15 family. In terms of assembly, part of the 30S ribosomal subunit. Forms a bridge to the 50S subunit in the 70S ribosome, contacting the 23S rRNA.

Functionally, one of the primary rRNA binding proteins, it binds directly to 16S rRNA where it helps nucleate assembly of the platform of the 30S subunit by binding and bridging several RNA helices of the 16S rRNA. Its function is as follows. Forms an intersubunit bridge (bridge B4) with the 23S rRNA of the 50S subunit in the ribosome. In Rhizobium etli (strain CIAT 652), this protein is Small ribosomal subunit protein uS15.